Consider the following 232-residue polypeptide: Golgi SNAP receptor complex member 1 (232 aa).

Residues 1 to 211 (MGGSSYDVLR…QRINIKKRRD (211 aa)) are Cytoplasmic-facing. Coiled-coil stretches lie at residues 6–23 (YDVL…IDLK) and 52–80 (GEHV…MSDL). A helical; Anchor for type IV membrane protein transmembrane segment spans residues 212-232 (SLILGAVIGFCVILLLLYAFN).

The protein belongs to the GOSR1 family. In terms of assembly, component of several multiprotein Golgi SNARE complexes.

It localises to the golgi apparatus membrane. Its function is as follows. Involved in transport from the ER to the Golgi apparatus as well as in intra-Golgi transport. It belongs to a super-family of proteins called t-SNAREs or soluble NSF (N-ethylmaleimide-sensitive factor) attachment protein receptor. This is Golgi SNAP receptor complex member 1 (Gos28) from Drosophila melanogaster (Fruit fly).